We begin with the raw amino-acid sequence, 469 residues long: Ribulose bisphosphate carboxylase large chain (469 aa).

The substrate site is built by N115 and T165. Residue K167 is the Proton acceptor of the active site. K169 lines the substrate pocket. Mg(2+) contacts are provided by K193, D195, and E196. K193 is modified (N6-carboxylysine). H286 serves as the catalytic Proton acceptor. Substrate-binding residues include R287, H319, and S371.

Belongs to the RuBisCO large chain family. Type I subfamily. As to quaternary structure, heterohexadecamer of 8 large chains and 8 small chains. Mg(2+) is required as a cofactor.

The protein localises to the plastid. It is found in the organellar chromatophore. It carries out the reaction 2 (2R)-3-phosphoglycerate + 2 H(+) = D-ribulose 1,5-bisphosphate + CO2 + H2O. The enzyme catalyses D-ribulose 1,5-bisphosphate + O2 = 2-phosphoglycolate + (2R)-3-phosphoglycerate + 2 H(+). Functionally, ruBisCO catalyzes two reactions: the carboxylation of D-ribulose 1,5-bisphosphate, the primary event in carbon dioxide fixation, as well as the oxidative fragmentation of the pentose substrate. Both reactions occur simultaneously and in competition at the same active site. This Paulinella chromatophora protein is Ribulose bisphosphate carboxylase large chain.